Consider the following 358-residue polypeptide: UDP-N-acetylglucosamine--N-acetylmuramyl-(pentapeptide) pyrophosphoryl-undecaprenol N-acetylglucosamine transferase (358 aa).

Residues Thr-11–Gly-13, Asn-124, Arg-164, Ser-195, and Gln-291 each bind UDP-N-acetyl-alpha-D-glucosamine.

This sequence belongs to the glycosyltransferase 28 family. MurG subfamily.

The protein localises to the cell inner membrane. The enzyme catalyses di-trans,octa-cis-undecaprenyl diphospho-N-acetyl-alpha-D-muramoyl-L-alanyl-D-glutamyl-meso-2,6-diaminopimeloyl-D-alanyl-D-alanine + UDP-N-acetyl-alpha-D-glucosamine = di-trans,octa-cis-undecaprenyl diphospho-[N-acetyl-alpha-D-glucosaminyl-(1-&gt;4)]-N-acetyl-alpha-D-muramoyl-L-alanyl-D-glutamyl-meso-2,6-diaminopimeloyl-D-alanyl-D-alanine + UDP + H(+). It functions in the pathway cell wall biogenesis; peptidoglycan biosynthesis. Functionally, cell wall formation. Catalyzes the transfer of a GlcNAc subunit on undecaprenyl-pyrophosphoryl-MurNAc-pentapeptide (lipid intermediate I) to form undecaprenyl-pyrophosphoryl-MurNAc-(pentapeptide)GlcNAc (lipid intermediate II). The chain is UDP-N-acetylglucosamine--N-acetylmuramyl-(pentapeptide) pyrophosphoryl-undecaprenol N-acetylglucosamine transferase from Leptospira interrogans serogroup Icterohaemorrhagiae serovar copenhageni (strain Fiocruz L1-130).